Consider the following 264-residue polypeptide: Tritrans,polycis-undecaprenyl-diphosphate synthase (geranylgeranyl-diphosphate specific) (264 aa).

The active site involves D43. Residue D43 participates in Mg(2+) binding. Substrate contacts are provided by residues 44–47 (GNRR), W48, H60, and 88–90 (STE). Catalysis depends on N91, which acts as the Proton acceptor. Substrate-binding positions include F92, R94, R213, and 219–221 (RIS). E232 contributes to the Mg(2+) binding site.

It belongs to the UPP synthase family. As to quaternary structure, homodimer. Mg(2+) serves as cofactor.

The enzyme catalyses geranylgeranyl diphosphate + 7 isopentenyl diphosphate = tri-trans,hepta-cis-undecaprenyl diphosphate + 7 diphosphate. Functionally, catalyzes the sequential condensation of isopentenyl diphosphate (IPP) with geranylgeranyl diphosphate (GGPP) to yield (2Z,6Z,10Z,14Z,18Z,22Z,26Z,30E,34E,38E)-undecaprenyl diphosphate (tritrans,heptacis-UPP). It is probably the precursor of glycosyl carrier lipids. The sequence is that of Tritrans,polycis-undecaprenyl-diphosphate synthase (geranylgeranyl-diphosphate specific) from Pyrococcus furiosus (strain ATCC 43587 / DSM 3638 / JCM 8422 / Vc1).